A 60-amino-acid polypeptide reads, in one-letter code: Cecropin-B type 2 (60 aa).

A signal peptide spans 1-24 (MNFSKLFALVLLIGLVLLTGQTEA). Ile58 is subject to Isoleucine amide.

Belongs to the cecropin family.

The protein localises to the secreted. In terms of biological role, cecropins have lytic and antibacterial activity against several Gram-positive and Gram-negative bacteria. This chain is Cecropin-B type 2 (CECB2), found in Aedes albopictus (Asian tiger mosquito).